Consider the following 165-residue polypeptide: Shikimate kinase (165 aa).

12 to 17 (GCGKST) is a binding site for ATP. A Mg(2+)-binding site is contributed by Ser16. Substrate contacts are provided by Asp34, Arg57, and Gly79. Arg116 provides a ligand contact to ATP. Substrate is bound at residue Arg133.

It belongs to the shikimate kinase family. Monomer. Mg(2+) is required as a cofactor.

It localises to the cytoplasm. It carries out the reaction shikimate + ATP = 3-phosphoshikimate + ADP + H(+). It participates in metabolic intermediate biosynthesis; chorismate biosynthesis; chorismate from D-erythrose 4-phosphate and phosphoenolpyruvate: step 5/7. Its function is as follows. Catalyzes the specific phosphorylation of the 3-hydroxyl group of shikimic acid using ATP as a cosubstrate. The chain is Shikimate kinase from Clostridium botulinum (strain Eklund 17B / Type B).